We begin with the raw amino-acid sequence, 397 residues long: Lysophospholipid transporter LplT (397 aa).

Residues 1–17 (MSESVHTNTSLWSKGMK) are Periplasmic-facing. Residues 18 to 38 (AVIVAQFLSAFGDNALLFATL) form a helical membrane-spanning segment. Residues 39-52 (ALLKAQFYPEWSQP) lie on the Cytoplasmic side of the membrane. A helical membrane pass occupies residues 53 to 73 (VLQMVFVGAYILFAPFVGQVA). Topologically, residues 74–90 (DSFAKGRVMMFANGLKL) are periplasmic. Residues 91-111 (LGAASICFGFNPFVGYTLVGI) traverse the membrane as a helical segment. Residues 112–144 (GAAAYSPAKYGILGELTTGDKLVKANGLMEAST) lie on the Cytoplasmic side of the membrane. A helical transmembrane segment spans residues 145–165 (IAAILLGSVAGGVLADLHVLV). A topological domain (periplasmic) is located at residue alanine 166. Residues 167–187 (LAACALAYAGAVAANIYIPKL) form a helical membrane-spanning segment. The Cytoplasmic segment spans residues 188-226 (AAARPGQSWNVLKMTCSFKSACTSLWQNGETRFSLVGTS). A helical membrane pass occupies residues 227-247 (LFWGAGVTLRFLLVLWVPVAL). Residues 248 to 256 (GITDNATPT) are Periplasmic-facing. The helical transmembrane segment at 257–277 (YLNAMVAIGIVLGAGAAAKLV) threads the bilayer. Residues 278-280 (TLE) are Cytoplasmic-facing. Residues 281 to 301 (TVSRCMPAGILIGVVVLFFSL) traverse the membrane as a helical segment. Over 302–304 (QHE) the chain is Periplasmic. Residues 305-325 (LLPAYALLMLIGVLGGFFVVP) form a helical membrane-spanning segment. Residues 326–343 (LNALLQERGKKSVGAGNA) are Cytoplasmic-facing. Residues 344–364 (IAVQNLGENSAMLLMLGIYSL) form a helical membrane-spanning segment. The Periplasmic portion of the chain corresponds to 365–366 (AV). A helical membrane pass occupies residues 367-387 (LVGIPVVPIGIGFGTLFALAI). Topologically, residues 388–397 (TALWIWQRRH) are cytoplasmic.

The protein belongs to the major facilitator superfamily. LplT (TC 2.A.1.42) family.

The protein resides in the cell inner membrane. Catalyzes the facilitated diffusion of 2-acyl-glycero-3-phosphoethanolamine (2-acyl-GPE) into the cell. The sequence is that of Lysophospholipid transporter LplT from Escherichia fergusonii (strain ATCC 35469 / DSM 13698 / CCUG 18766 / IAM 14443 / JCM 21226 / LMG 7866 / NBRC 102419 / NCTC 12128 / CDC 0568-73).